A 418-amino-acid polypeptide reads, in one-letter code: Pentatricopeptide repeat-containing protein At2g18520, mitochondrial (418 aa).

The transit peptide at 1-14 (MTSSRLYLRFLRRF) directs the protein to the mitochondrion. 8 PPR repeats span residues 101–135 (TETFLSTLIRSYGRASMFDHAMKMFEEMDKLGTPR), 136–166 (TVVSFNALLAACLHSDLFERVPQLFDEFPQR), 173–207 (DKISYGMLIKSYCDSGKPEKAMEIMRDMEVKGVEV), 208–242 (TIIAFTTILGSLYKNGLVDEAESLWIEMVNKGCDL), 243–276 (DNTVYNVRLMNAAKESPERVKELMEEMSSVGLKP), 277–311 (DTVSYNYLMTAYCVKGMMSEAKKVYEGLEQPNAAT), 312–342 (FRTLIFHLCINGLYDQGLTVFKKSAIVHKIP), and 343–373 (DFKTCKHLTEGLVKNNRMEDARGVARIVKKK).

The protein belongs to the PPR family. P subfamily.

Its subcellular location is the mitochondrion. This chain is Pentatricopeptide repeat-containing protein At2g18520, mitochondrial, found in Arabidopsis thaliana (Mouse-ear cress).